The sequence spans 314 residues: Olfactory receptor 5P72 (314 aa).

At 1-28 (MAFLEVGNHTAVTEFILLGLTDDPVLRV) the chain is on the extracellular side. An N-linked (GlcNAc...) asparagine glycan is attached at N8. The helical transmembrane segment at 29–49 (VLFTIILCIYLVTVMGNLSTI) threads the bilayer. Residues 50-57 (LLIRVSSQ) lie on the Cytoplasmic side of the membrane. The helical transmembrane segment at 58–78 (LHHPMYFFLSHLASVDMGLSS) threads the bilayer. The Extracellular segment spans residues 79–102 (SVTPNMLLNFLIERNTISYLGCGI). The cysteines at positions 100 and 192 are disulfide-linked. Residues 103–123 (QQSLADFFGSVECFLLAAMAY) form a helical membrane-spanning segment. The Cytoplasmic portion of the chain corresponds to 124-136 (DRFMAICNPLLYS). A helical membrane pass occupies residues 137 to 157 (TKMSTKVCVQLVVGSYIGGFL). Residues 158–199 (NASLIMFYFFSFLFCGPNRVDHFFCDFAPLVELSCSDVSVSV) lie on the Extracellular side of the membrane. The helical transmembrane segment at 200 to 220 (IVISFSAGSVTMITVFVIAVS) threads the bilayer. Residues 221–240 (YSYILITILKMHSIEGRHKA) lie on the Cytoplasmic side of the membrane. A helical transmembrane segment spans residues 241 to 261 (FSTCTSHLTAVTLYYGTITFI). Residues 262–274 (YVMPKSSFSTDQN) lie on the Extracellular side of the membrane. Residues 275–295 (KVVSVFYMVMIPMLNPLIYSL) form a helical membrane-spanning segment. Residues 296–314 (RNNEIKGAIKRQLGKKMSC) lie on the Cytoplasmic side of the membrane.

The protein belongs to the G-protein coupled receptor 1 family.

It localises to the cell membrane. Functionally, potential odorant receptor. The sequence is that of Olfactory receptor 5P72 from Mus musculus (Mouse).